We begin with the raw amino-acid sequence, 124 residues long: Large ribosomal subunit protein bL12 (124 aa).

The protein belongs to the bacterial ribosomal protein bL12 family. Homodimer. Part of the ribosomal stalk of the 50S ribosomal subunit. Forms a multimeric L10(L12)X complex, where L10 forms an elongated spine to which 2 to 4 L12 dimers bind in a sequential fashion. Binds GTP-bound translation factors.

Forms part of the ribosomal stalk which helps the ribosome interact with GTP-bound translation factors. Is thus essential for accurate translation. The protein is Large ribosomal subunit protein bL12 of Cupriavidus necator (strain ATCC 17699 / DSM 428 / KCTC 22496 / NCIMB 10442 / H16 / Stanier 337) (Ralstonia eutropha).